The sequence spans 342 residues: tRNA N6-adenosine threonylcarbamoyltransferase (342 aa).

Fe cation is bound by residues His-112 and His-116. Residues Leu-134 to Gly-138, Asp-167, Gly-180, and Asn-280 contribute to the substrate site. Asp-308 provides a ligand contact to Fe cation.

This sequence belongs to the KAE1 / TsaD family. It depends on Fe(2+) as a cofactor.

Its subcellular location is the cytoplasm. It catalyses the reaction L-threonylcarbamoyladenylate + adenosine(37) in tRNA = N(6)-L-threonylcarbamoyladenosine(37) in tRNA + AMP + H(+). In terms of biological role, required for the formation of a threonylcarbamoyl group on adenosine at position 37 (t(6)A37) in tRNAs that read codons beginning with adenine. Is involved in the transfer of the threonylcarbamoyl moiety of threonylcarbamoyl-AMP (TC-AMP) to the N6 group of A37, together with TsaE and TsaB. TsaD likely plays a direct catalytic role in this reaction. The protein is tRNA N6-adenosine threonylcarbamoyltransferase of Rickettsia canadensis (strain McKiel).